Consider the following 118-residue polypeptide: uncharacterized protein (118 aa).

This is an uncharacterized protein from Aquifex aeolicus (strain VF5).